Consider the following 215-residue polypeptide: 3-demethoxyubiquinol 3-hydroxylase (215 aa).

Residues glutamate 64, glutamate 94, histidine 97, glutamate 146, glutamate 178, and histidine 181 each coordinate Fe cation.

This sequence belongs to the COQ7 family. Fe cation serves as cofactor.

Its subcellular location is the cell membrane. The catalysed reaction is a 5-methoxy-2-methyl-3-(all-trans-polyprenyl)benzene-1,4-diol + AH2 + O2 = a 3-demethylubiquinol + A + H2O. It functions in the pathway cofactor biosynthesis; ubiquinone biosynthesis. Catalyzes the hydroxylation of 2-nonaprenyl-3-methyl-6-methoxy-1,4-benzoquinol during ubiquinone biosynthesis. This is 3-demethoxyubiquinol 3-hydroxylase from Coxiella burnetii (strain CbuG_Q212) (Coxiella burnetii (strain Q212)).